The chain runs to 77 residues: Conotoxin ArMKLT2-022 (77 aa).

The N-terminal stretch at 1–22 is a signal peptide; the sequence is MKLTCVLIVAVLFLTACQLIAA. Residues 23–46 constitute a propeptide that is removed on maturation; that stretch reads DDSRDLKRFSRRKMRDGMLNTKNT. Pyrrolidone carboxylic acid is present on Gln-49. 3 disulfides stabilise this stretch: Cys-50/Cys-65, Cys-57/Cys-68, and Cys-64/Cys-73.

The protein belongs to the conotoxin O1 superfamily. In terms of tissue distribution, expressed by the venom duct.

The protein localises to the secreted. This Conus arenatus (Sand-dusted cone) protein is Conotoxin ArMKLT2-022.